Here is a 92-residue protein sequence, read N- to C-terminus: Defensin-like protein 226 (92 aa).

The N-terminal stretch at 1 to 27 (MKCGVLFMISCLLITFLVLSHVREVES) is a signal peptide. 4 disulfides stabilise this stretch: Cys-33–Cys-92, Cys-43–Cys-71, Cys-51–Cys-86, and Cys-69–Cys-88.

Belongs to the DEFL family.

The protein resides in the secreted. This Arabidopsis thaliana (Mouse-ear cress) protein is Defensin-like protein 226 (SCRL2).